Here is a 347-residue protein sequence, read N- to C-terminus: LRP2-binding protein (347 aa).

A TPR repeat occupies 59–92 (TLAYFLRGQLYFEEGWYEEALEQFEEIKEKDHQA). 6 Sel1-like repeats span residues 93 to 125 (TYQL…DSPC), 133 to 168 (FAAA…DNGN), 173 to 206 (VKAQ…GNGN), 207 to 242 (LESQ…ERGN), 243 to 277 (VYAQ…EVHD), and 297 to 332 (AMAS…RLNP).

In terms of assembly, interacts with LRP2.

The protein resides in the cytoplasm. Its function is as follows. May act as an adapter that regulates LRP2 function. This is LRP2-binding protein (LRP2BP) from Homo sapiens (Human).